Reading from the N-terminus, the 858-residue chain is Bifunctional uridylyltransferase/uridylyl-removing enzyme (858 aa).

Positions 1-318 (MNPTDLHPIK…FPRPESDARA (318 aa)) are uridylyltransferase. The tract at residues 319–674 (IDEEFRSLHG…VRPTEEGSGL (356 aa)) is uridylyl-removing. Residues 437–559 (VDQHTLAVIR…VKDERHLNAL (123 aa)) form the HD domain. ACT domains lie at 675-756 (QIMV…LADV) and 789-858 (RLSV…LAGE).

It belongs to the GlnD family. Mg(2+) is required as a cofactor.

The enzyme catalyses [protein-PII]-L-tyrosine + UTP = [protein-PII]-uridylyl-L-tyrosine + diphosphate. It carries out the reaction [protein-PII]-uridylyl-L-tyrosine + H2O = [protein-PII]-L-tyrosine + UMP + H(+). Uridylyltransferase (UTase) activity is inhibited by glutamine, while glutamine activates uridylyl-removing (UR) activity. Functionally, modifies, by uridylylation and deuridylylation, the PII regulatory proteins (GlnB and homologs), in response to the nitrogen status of the cell that GlnD senses through the glutamine level. Under low glutamine levels, catalyzes the conversion of the PII proteins and UTP to PII-UMP and PPi, while under higher glutamine levels, GlnD hydrolyzes PII-UMP to PII and UMP (deuridylylation). Thus, controls uridylylation state and activity of the PII proteins, and plays an important role in the regulation of nitrogen assimilation and metabolism. This Bordetella avium (strain 197N) protein is Bifunctional uridylyltransferase/uridylyl-removing enzyme.